The primary structure comprises 186 residues: Elongation factor P (186 aa).

The protein belongs to the elongation factor P family.

The protein resides in the cytoplasm. It participates in protein biosynthesis; polypeptide chain elongation. Involved in peptide bond synthesis. Stimulates efficient translation and peptide-bond synthesis on native or reconstituted 70S ribosomes in vitro. Probably functions indirectly by altering the affinity of the ribosome for aminoacyl-tRNA, thus increasing their reactivity as acceptors for peptidyl transferase. This Shewanella woodyi (strain ATCC 51908 / MS32) protein is Elongation factor P.